The chain runs to 25 residues: Small ribosomal subunit protein eS32 (25 aa).

Residues 1 to 25 are disordered; it reads MRAKWRKKRMRRLKRKRRKMRQRSK.

This sequence belongs to the eukaryotic ribosomal protein eS32 family. As to quaternary structure, component of the large ribosomal subunit.

It is found in the cytoplasm. Functionally, component of the small ribosomal subunit. The ribosome is a large ribonucleoprotein complex responsible for the synthesis of proteins in the cell. This chain is Small ribosomal subunit protein eS32 (rpl41), found in Cyprinus carpio (Common carp).